The chain runs to 111 residues: Large ribosomal subunit protein uL22 (111 aa).

This sequence belongs to the universal ribosomal protein uL22 family. In terms of assembly, part of the 50S ribosomal subunit.

Functionally, this protein binds specifically to 23S rRNA; its binding is stimulated by other ribosomal proteins, e.g. L4, L17, and L20. It is important during the early stages of 50S assembly. It makes multiple contacts with different domains of the 23S rRNA in the assembled 50S subunit and ribosome. In terms of biological role, the globular domain of the protein is located near the polypeptide exit tunnel on the outside of the subunit, while an extended beta-hairpin is found that lines the wall of the exit tunnel in the center of the 70S ribosome. This chain is Large ribosomal subunit protein uL22, found in Protochlamydia amoebophila (strain UWE25).